The chain runs to 445 residues: GTPase Der (445 aa).

EngA-type G domains lie at 3-167 (PVIA…YAGQ) and 180-353 (IKIA…AAAM). GTP-binding positions include 9–16 (GRPNVGKS), 56–60 (DTGGF), 119–122 (NKAE), 186–193 (GRPNVGKS), 233–237 (DTAGL), and 298–301 (NKWD). The 85-residue stretch at 354 to 438 (AKLPTPKLTR…PLRIEFRSSN (85 aa)) folds into the KH-like domain.

Belongs to the TRAFAC class TrmE-Era-EngA-EngB-Septin-like GTPase superfamily. EngA (Der) GTPase family. In terms of assembly, associates with the 50S ribosomal subunit.

Functionally, GTPase that plays an essential role in the late steps of ribosome biogenesis. The sequence is that of GTPase Der from Burkholderia ambifaria (strain ATCC BAA-244 / DSM 16087 / CCUG 44356 / LMG 19182 / AMMD) (Burkholderia cepacia (strain AMMD)).